Consider the following 260-residue polypeptide: Acetylglutamate kinase (260 aa).

Substrate contacts are provided by residues 46-47 (GG), Arg-68, and Asn-160.

Belongs to the acetylglutamate kinase family. ArgB subfamily.

The protein resides in the cytoplasm. The catalysed reaction is N-acetyl-L-glutamate + ATP = N-acetyl-L-glutamyl 5-phosphate + ADP. The protein operates within amino-acid biosynthesis; L-arginine biosynthesis; N(2)-acetyl-L-ornithine from L-glutamate: step 2/4. In terms of biological role, catalyzes the ATP-dependent phosphorylation of N-acetyl-L-glutamate. This is Acetylglutamate kinase from Shewanella sp. (strain ANA-3).